The sequence spans 190 residues: uncharacterized protein (190 aa).

This is an uncharacterized protein from Homo sapiens (Human).